The following is a 122-amino-acid chain: Large ribosomal subunit protein uL14 (122 aa).

The protein belongs to the universal ribosomal protein uL14 family. In terms of assembly, part of the 50S ribosomal subunit. Forms a cluster with proteins L3 and L19. In the 70S ribosome, L14 and L19 interact and together make contacts with the 16S rRNA in bridges B5 and B8.

Functionally, binds to 23S rRNA. Forms part of two intersubunit bridges in the 70S ribosome. In Halalkalibacterium halodurans (strain ATCC BAA-125 / DSM 18197 / FERM 7344 / JCM 9153 / C-125) (Bacillus halodurans), this protein is Large ribosomal subunit protein uL14.